The chain runs to 104 residues: Histone-like protein p6 (104 aa).

A DNA-binding region spans residues 1–19 (MAKMMQREITKTTVNVAKM). The tract at residues 85 to 104 (VEKDEDQEEQTEAPEEQVAE) is disordered. Residues 88-104 (DEDQEEQTEAPEEQVAE) are compositionally biased toward acidic residues.

The protein belongs to the phi29likevirus histone-like protein p6 family. In terms of assembly, homodimer. Homomultimer. Binds to double-stranded DNA giving rise to multimeric nucleoprotein complexes. Binding specificity for the viral DNA is based on supercoiling, the viral genome having a negative superhelicity lower than that of plasmid DNA. Interacts with the DNA replication protein p17; this interaction optimizes the binding of protein p6 at the viral DNA ends, thus favoring the initiation of replication. Interacts with the late genes activator p4 (via C-terminus).

Histone-like nucleoprotein that binds to the viral dsDNA and responsible for wrapping and compacting the viral DNA about 4-fold. Forms a nucleoprotein complex in which the DNA adopts a right-handed toroidal conformation winding around a protein core. Binds ito most, if not all, the viral genome, although with different affinity, the highest one corresponding to the genome ends. The formation of the nucleoprotein complex at the genome ends, activates the initiation of viral DNA replication. The binding of p6 would recruit the complex formed by the TP and the DNA polymerase to the origin. Protein p6 also represses early transcription from promoter C2, and, together with protein p4, represses transcription from promoters A2b and A2c and activates late transcription from promoter A3. Protein p6 is therefore involved in the early to late transcription switch. The formation of the nucleoprotein complex at the right end of the phage genome where the early promoter C2 is located affects local topology, which may contribute to the promoter repression. This chain is Histone-like protein p6 (6), found in Bacillus subtilis (Bacteriophage phi-29).